The chain runs to 690 residues: Methionine--tRNA ligase (690 aa).

A 'HIGH' region motif is present at residues 20–30; the sequence is PYANGSIHLGH. Zn(2+)-binding residues include cysteine 151, cysteine 154, cysteine 164, and cysteine 167. The 'KMSKS' region signature appears at 337–341; the sequence is KMSKS. Lysine 340 serves as a coordination point for ATP. Residues 589–690 enclose the tRNA-binding domain; it reads DFAKVDLRIA…EGAQPGMRVM (102 aa).

It belongs to the class-I aminoacyl-tRNA synthetase family. MetG type 1 subfamily. In terms of assembly, homodimer. Zn(2+) serves as cofactor.

It localises to the cytoplasm. It catalyses the reaction tRNA(Met) + L-methionine + ATP = L-methionyl-tRNA(Met) + AMP + diphosphate. In terms of biological role, is required not only for elongation of protein synthesis but also for the initiation of all mRNA translation through initiator tRNA(fMet) aminoacylation. This chain is Methionine--tRNA ligase, found in Vibrio vulnificus (strain YJ016).